A 1383-amino-acid chain; its full sequence is MLRKLTVDQINDWFTIGKTVTNVELLGLPPAFPAEAPREEVQRSEEVPNEDPTAQAQVPVKATAPARPASTSGRSLSQRSSEMEYINKYRQLEEQELDIYGQDQPPSGPGLRSPLAKLSNVACIPETTYKYPDLPINRCKEEVISLIESNSVVIIHGATGSGKSTQLPQYVLDHYTQRSAFCNIVVTQPRKIGASSIARWISKERSWTLGGLVGYQVGLEKIATEDTRLIYMTTGVLLQKIVSAKSLMEFTHIFIDEVHERTEEMDFLLLVVRKLLRTNSRFVKVVLMSATINCKQFADYFAVPVQNKMNPAYVFEVEGKPHAIEEYYLNDLGHIYHSGLPYRLEEPVITKDVYEVAVSLIQMFDDLDMKESGNKTWSGAQFVSERSSVLVFLPGLGEINYMHELLTNMIHKRLQVYPLHSSVTLEEQNNVFLSPVPGYRKIILSTNIAESSVTVPDVKYVIDFCLTRTLVCDEDTNYQSLRLSWASKTSCDQRKGRAGRVSKGYCYRLIPRDFWDSAIPDHVVPEMLRCPLGSTILKVKLLDMGEPRALLATALSPPSLSDIERTILLLKEVGALAVSGQREDENPHDGELTFLGRVLAQLPVSQQLGKLVVLGHVFGCLDECLIIAAALSLKNFFTMPFRQHLDGYRNKVHFSGSSRSDCLALVEAFRAWQACRQRGELRRPKDELDWGRLNYIQIKRIREVAELYEELKNRISQFNMFVGPHHPVLDQEYPYKQRFILQVVLAGAFYPNYFTFGQPDEEMAVRELAGKDPKTTVVLKHIPPYGFLYYKQLQSLFRQCGQVKSIVFDGAKAFVEFSRNPTERFKTLPAVNLAVKMSQLKVSLELSVHAAEEIEGKVQGGSVSKLRNTRVNVDFQKQTVDPMQVSFNTLDRPRTVADLLLTIDVTEVVEVGHFWGYRIDERNAELLKQLTAEINRLELVPLPIHPHPDLVCLAPFTDYNKESYFRAQILYVSGNSAEVFFVDYGNRSHVDLDLLREIPCQFLELPFQALEFKICKMRPSAKSLICGEHWSGGAHGRFAALVGGCPLLVKVFSIVHSVLHVDVYRYSGAQDAVNVRDVLIREGYAELAEESYESKQSYEVLKGFFAKSVDTMPDGSVSSPLKDDEKHLLRILLESFASNRLGAPNCKAVLHGPFNPYELKCHSLTRISKFRCVWIEKESINSVVISDSPADLHQRMLVAASLSVNETGSTMLLRETSLMPHIPGLPALLSMLFAPVMELRVDREGKCYTGVLCGLGWNSATEAPILPEHDIELAFDVRLNVEDIVEINILRAAINKLVCDGPNGSKYLGPERIAQLQENARQKLLGLFCRLKPREKITPQWHEKPYEWNQVDPRLIMEQAEPEGSPGKSTSLYQLHTPVVLSP.

Residues 35 to 82 (EAPREEVQRSEEVPNEDPTAQAQVPVKATAPARPASTSGRSLSQRSSE) form a disordered region. Positions 36 to 46 (APREEVQRSEE) are enriched in basic and acidic residues. A compositionally biased stretch (low complexity) spans 70-80 (STSGRSLSQRS). The Helicase ATP-binding domain maps to 144–310 (ISLIESNSVV…FAVPVQNKMN (167 aa)). 157-164 (GATGSGKS) contributes to the ATP binding site. A DEAH box motif is present at residues 256 to 259 (DEVH). The Helicase C-terminal domain occupies 378-545 (SGAQFVSERS…ILKVKLLDMG (168 aa)). Residues 945–1005 (HPHPDLVCLA…REIPCQFLEL (61 aa)) form the Tudor domain.

Belongs to the DEAD box helicase family. DEAH subfamily. In terms of assembly, interacts with piRNA-associated proteins PIWIL1 and PIWIL4. In terms of tissue distribution, predominantly expressed in reproductive organs. Detected in mitotic spermatogonia, meiotic spermatocytes (predominantly at the pachytene stage), haploid spermatids in the testis, and in growing oocytes in the ovary (at protein level).

The protein resides in the cytoplasm. Its subcellular location is the nucleus. The catalysed reaction is ATP + H2O = ADP + phosphate + H(+). Functionally, ATP-binding RNA helicase which plays a central role during spermatogenesis by repressing transposable elements and preventing their mobilization, which is essential for the germline integrity. Acts via the piRNA metabolic process, which mediates the repression of transposable elements during meiosis by forming complexes composed of piRNAs and Piwi proteins and governs the methylation and subsequent repression of transposons. Acts downstream of piRNA biogenesis: exclusively required for transposon silencing in the nucleus, suggesting that it acts as a nuclear effector in the nucleus together with PIWIL4. This chain is ATP-dependent RNA helicase TDRD9, found in Mus musculus (Mouse).